The sequence spans 792 residues: Xaa-Pro dipeptidyl-peptidase (792 aa).

Active-site charge relay system residues include Ser-363, Asp-482, and His-513.

Belongs to the peptidase S15 family. As to quaternary structure, homodimer.

It is found in the cytoplasm. It carries out the reaction Hydrolyzes Xaa-Pro-|- bonds to release unblocked, N-terminal dipeptides from substrates including Ala-Pro-|-p-nitroanilide and (sequentially) Tyr-Pro-|-Phe-Pro-|-Gly-Pro-|-Ile.. In terms of biological role, removes N-terminal dipeptides sequentially from polypeptides having unsubstituted N-termini provided that the penultimate residue is proline. This chain is Xaa-Pro dipeptidyl-peptidase (pepX), found in Lactobacillus delbrueckii subsp. lactis.